Here is a 92-residue protein sequence, read N- to C-terminus: Small ribosomal subunit protein uS19 (92 aa).

Belongs to the universal ribosomal protein uS19 family.

Its function is as follows. Protein S19 forms a complex with S13 that binds strongly to the 16S ribosomal RNA. The protein is Small ribosomal subunit protein uS19 of Rickettsia akari (strain Hartford).